The sequence spans 415 residues: Glutamyl-tRNA reductase (415 aa).

Substrate is bound by residues 49–52 (TCNR), Ser104, 109–111 (EPQ), and Gln115. The active-site Nucleophile is Cys50. 184–189 (GAGEMI) contacts NADP(+).

This sequence belongs to the glutamyl-tRNA reductase family. In terms of assembly, homodimer.

The enzyme catalyses (S)-4-amino-5-oxopentanoate + tRNA(Glu) + NADP(+) = L-glutamyl-tRNA(Glu) + NADPH + H(+). It functions in the pathway porphyrin-containing compound metabolism; protoporphyrin-IX biosynthesis; 5-aminolevulinate from L-glutamyl-tRNA(Glu): step 1/2. Functionally, catalyzes the NADPH-dependent reduction of glutamyl-tRNA(Glu) to glutamate 1-semialdehyde (GSA). The protein is Glutamyl-tRNA reductase of Neisseria gonorrhoeae (strain ATCC 700825 / FA 1090).